The chain runs to 172 residues: Translation initiation factor IF-3 (172 aa).

It belongs to the IF-3 family. As to quaternary structure, monomer.

The protein localises to the cytoplasm. Functionally, IF-3 binds to the 30S ribosomal subunit and shifts the equilibrium between 70S ribosomes and their 50S and 30S subunits in favor of the free subunits, thus enhancing the availability of 30S subunits on which protein synthesis initiation begins. The sequence is that of Translation initiation factor IF-3 from Campylobacter jejuni subsp. doylei (strain ATCC BAA-1458 / RM4099 / 269.97).